The primary structure comprises 293 residues: Acetylglutamate kinase (293 aa).

Substrate-binding positions include 68-69 (GG), R90, and N189.

The protein belongs to the acetylglutamate kinase family. ArgB subfamily.

The protein resides in the cytoplasm. It carries out the reaction N-acetyl-L-glutamate + ATP = N-acetyl-L-glutamyl 5-phosphate + ADP. It functions in the pathway amino-acid biosynthesis; L-arginine biosynthesis; N(2)-acetyl-L-ornithine from L-glutamate: step 2/4. Functionally, catalyzes the ATP-dependent phosphorylation of N-acetyl-L-glutamate. The sequence is that of Acetylglutamate kinase from Caldicellulosiruptor saccharolyticus (strain ATCC 43494 / DSM 8903 / Tp8T 6331).